The following is a 506-amino-acid chain: Maturase K (506 aa).

Belongs to the intron maturase 2 family. MatK subfamily.

Its subcellular location is the plastid. The protein resides in the chloroplast. Its function is as follows. Usually encoded in the trnK tRNA gene intron. Probably assists in splicing its own and other chloroplast group II introns. The protein is Maturase K of Uncarina grandidieri (Mouse trap tree).